Reading from the N-terminus, the 446-residue chain is Tubulin gamma chain (446 aa).

A GTP-binding site is contributed by 142–148; the sequence is AGGTGSG.

This sequence belongs to the tubulin family. Interacts with mto1. Interacts with mto2.

The protein resides in the cytoplasm. The protein localises to the cytoskeleton. It is found in the microtubule organizing center. It localises to the spindle pole body. Tubulin is the major constituent of microtubules. The gamma chain is found at microtubule organizing centers (MTOC) such as the spindle poles or the centrosome, suggesting that it is involved in the minus-end nucleation of microtubule assembly. This is Tubulin gamma chain from Schizosaccharomyces pombe (strain 972 / ATCC 24843) (Fission yeast).